A 311-amino-acid chain; its full sequence is HPr kinase/phosphorylase (311 aa).

Active-site residues include H138 and K159. Residue G153–S160 participates in ATP binding. Position 160 (S160) interacts with Mg(2+). The active-site Proton acceptor; for phosphorylation activity. Proton donor; for dephosphorylation activity is D177. An important for the catalytic mechanism of both phosphorylation and dephosphorylation region spans residues L201–D210. E202 is a binding site for Mg(2+). R243 is a catalytic residue. The segment at P264 to R269 is important for the catalytic mechanism of dephosphorylation.

Belongs to the HPrK/P family. Homohexamer. It depends on Mg(2+) as a cofactor.

The enzyme catalyses [HPr protein]-L-serine + ATP = [HPr protein]-O-phospho-L-serine + ADP + H(+). It carries out the reaction [HPr protein]-O-phospho-L-serine + phosphate + H(+) = [HPr protein]-L-serine + diphosphate. Functionally, catalyzes the ATP- as well as the pyrophosphate-dependent phosphorylation of a specific serine residue in HPr, a phosphocarrier protein of the phosphoenolpyruvate-dependent sugar phosphotransferase system (PTS). HprK/P also catalyzes the pyrophosphate-producing, inorganic phosphate-dependent dephosphorylation (phosphorolysis) of seryl-phosphorylated HPr (P-Ser-HPr). The two antagonistic activities of HprK/P are regulated by several intracellular metabolites, which change their concentration in response to the absence or presence of rapidly metabolisable carbon sources (glucose, fructose, etc.) in the growth medium. Therefore, by controlling the phosphorylation state of HPr, HPrK/P is a sensor enzyme that plays a major role in the regulation of carbon metabolism and sugar transport: it mediates carbon catabolite repression (CCR), and regulates PTS-catalyzed carbohydrate uptake and inducer exclusion. This is HPr kinase/phosphorylase from Streptococcus agalactiae serotype Ia (strain ATCC 27591 / A909 / CDC SS700).